The chain runs to 455 residues: Post-transcriptional regulator MTA (455 aa).

Residues 17–163 (DSVSSSEFDE…QVNCQRQDDD (147 aa)) form a disordered region. Positions 23–42 (EFDESRDDETDAPTLEDEQL) are enriched in acidic residues. Residues 88–98 (SPLSRPRSPSP) show a composition bias toward low complexity. 3 consecutive short sequence motifs (nuclear localization signal) follow at residues 101-107 (RYGKKIK), 121-130 (KRPRRRPRDR), and 143-152 (RAAPKRATRR). Residues C333, H423, C427, and C432 each coordinate Zn(2+). The CHC2-type zinc finger occupies 333–432 (CVFDKQSELA…HHSLCRNSEC (100 aa)).

Belongs to the HHV-1 ICP27 protein family. Homodimer. Homodimerization is required for transactivation. Interacts with host ALYREF. Associates in a complex with RNA, and host export factors NXF1/TAP and ALYREF; these interactions allow nuclear export of viral transcripts. Interacts with protein K-bZIP/K8; this interaction promotes viral gene expression during lytic infection. Interacts with host PABPC1. Interacts with host AGO2 and TNRC6A; these interactions inhibit host P-body formation. Interacts with PRKRA and EIF2AK2/PKR; these interactions inhibit host stress granule formation. In terms of processing, proteolytically cleaved by host caspase-7 (CASP7), leading to its inactivation, thereby preventing expression of viral lytic genes.

The protein resides in the host cytoplasm. It is found in the host nucleus. Its function is as follows. Post-transcriptional regulator that plays an essential role in the expression of viral lytic genes and productive viral replication. Possesses numerous activities that promote the expression of viral genes including enhancement of RNA stability, promotion of RNA splicing and stimulation of protein translation often via its ability to interact with different cellular cofactors. Stabilizes polyadenylated nuclear (PAN) RNA by cooperative binding to a 9-nt core of the MRE (MTA responsive element) together with host PABPC1. Functions as a viral splicing factor and promotes expression of intron-containing viral lytic genes. Protects viral transcripts from specific nuclear RNA decay pathways by preventing host MTREX recruitment that promotes unwinding and degradation of structured RNA substrates. Plays a role in the inhibition of host P-body formation by altering the scaffolding activity of TNRC6A at the initial stage thereby enhancing virus production. Also inhibits host stress granule formation by blocking autophosphorylation of EIF2AK2/PKR and its subsequent binding to dsRNA. In Human herpesvirus 8 type P (isolate GK18) (HHV-8), this protein is Post-transcriptional regulator MTA.